An 87-amino-acid chain; its full sequence is Acyl-CoA-binding protein (87 aa).

An N-acetylserine modification is found at Ser2. One can recognise an ACB domain in the interval Ser2–Ile87. Lys8 carries the post-translational modification N6-acetyllysine; alternate. N6-succinyllysine; alternate is present on Lys8. An acyl-CoA is bound at residue Lys14. At Lys17 the chain carries N6-succinyllysine. At Lys19 the chain carries N6-acetyllysine. Tyr29 is subject to Phosphotyrosine. An acyl-CoA is bound by residues Tyr29–Lys33, Lys55, and Tyr74. An N6-acetyllysine; alternate modification is found at Lys55. At Lys55 the chain carries N6-succinyllysine; alternate. An N6-(2-hydroxyisobutyryl)lysine; alternate modification is found at Lys55. Lys55 bears the N6-malonyllysine; alternate mark. Lys77 bears the N6-acetyllysine; alternate mark. Residue Lys77 is modified to N6-succinyllysine; alternate.

Belongs to the ACBP family. Monomer.

It localises to the endoplasmic reticulum. The protein localises to the golgi apparatus. Its function is as follows. Binds medium- and long-chain acyl-CoA esters with very high affinity and may function as an intracellular carrier of acyl-CoA esters. The chain is Acyl-CoA-binding protein (DBI) from Canis lupus familiaris (Dog).